The primary structure comprises 700 residues: uncharacterized protein (700 aa).

The next 9 helical transmembrane spans lie at 24–44 (VLCL…GLLF), 67–87 (LIIG…LLAK), 89–109 (VPLP…AELG), 115–135 (LLPA…YMPV), 139–159 (LLIY…WFWI), 383–403 (LMGT…VLLV), 420–440 (VGTV…IPEG), 461–481 (YGWA…LLWL), and 491–511 (LIDT…LWPQ).

It belongs to the YccS/YhfK family.

It is found in the cell membrane. This is an uncharacterized protein from Escherichia coli (strain K12).